A 1470-amino-acid polypeptide reads, in one-letter code: Calmodulin-regulated spectrin-associated protein 2 (1470 aa).

In terms of domain architecture, Calponin-homology (CH) spans 222–335 (WKLVPARYRK…FMAELFWWFE (114 aa)). A disordered region spans residues 374–397 (SSSSSDFTSRYTRPQTHSSVSGGI). Positions 380–390 (FTSRYTRPQTH) are enriched in polar residues. Residues serine 402 and serine 404 each carry the phosphoserine modification. Threonine 412 carries the phosphothreonine modification. 5 positions are modified to phosphoserine: serine 450, serine 581, serine 582, serine 594, and serine 656. 2 disordered regions span residues 580 to 622 (QSSP…EDSS) and 648 to 712 (ASNP…EGSE). Threonine 661 is subject to Phosphothreonine. At serine 663 the chain carries Phosphoserine. Residues 663–682 (STKSQPGSSASSSSGVKMTS) show a composition bias toward low complexity. The segment covering 686–696 (QKFRKLNHTDG) has biased composition (basic and acidic residues). Positions 739–776 (LLASEMVHLRMRLEEKRRAIEAQKKKMEAAFTKQRQKM) form a coiled coil. Residues 796 to 835 (REEAAGAEDEKVYTDRAKEKESQKMDGQRSKSLADIKESM) are compositionally biased toward basic and acidic residues. The segment at 796 to 864 (REEAAGAEDE…QWNLTSPSEE (69 aa)) is disordered. Serine 845 carries the post-translational modification Phosphoserine. A coiled-coil region spans residues 870-909 (ELLEYTKSIEKLNSSLHFLQQEMQRLSLQQEMLMQMREQQ). The tract at residues 905 to 1016 (MREQQSWVIS…IQTRSFVCFG (112 aa)) is MBD region. Phosphoserine occurs at positions 914 and 919. 2 disordered regions span residues 930-1059 (RQAG…PLES) and 1078-1099 (NEDQ…PTAP). A compositionally biased stretch (low complexity) spans 935-946 (SSAAAPFSADSP). Over residues 952 to 971 (SPQSSTRKSASFSVKNQRTP) the composition is skewed to polar residues. Phosphothreonine is present on residues threonine 979, threonine 984, and threonine 986. A phosphoserine mark is found at serine 990 and serine 1001. Polar residues predominate over residues 1001–1011 (SPSQVPIQTRS). Composition is skewed to basic and acidic residues over residues 1020–1037 (EPQK…EPSE) and 1044–1056 (SCDH…EVKP). Residues 1086–1098 (TDPPPKPVFPPTA) show a composition bias toward pro residues. Serine 1129 bears the Phosphoserine mark. Positions 1147-1219 (KDDQKAENDM…REFIRQEYMR (73 aa)) form a coiled coil. A compositionally biased stretch (basic and acidic residues) spans 1167–1233 (RLRREKETQL…KLMEDMDTVI (67 aa)). A disordered region spans residues 1167–1327 (RLRREKETQL…TTSSVASGTE (161 aa)). Over residues 1268-1280 (SSLSLASLNTGDT) the composition is skewed to polar residues. A phosphoserine mark is found at serine 1294, serine 1300, and serine 1302. Residues 1315-1327 (NASTTSSVASGTE) are compositionally biased toward polar residues. The region spanning 1330-1464 (GPKLYKEPSA…QTKRPVTPKK (135 aa)) is the CKK domain.

This sequence belongs to the CAMSAP1 family. As to quaternary structure, interacts with CAMSAP3. Interacts with KATNA1 and KATNB1; leading to regulate the length of CAMSAP2-decorated microtubule stretches. Interacts with a complex formed by AKAP9 and PDE4DIP; this interaction, which is PDE4DIP isoform-specific, recruits CAMSAP2 to the Golgi. Interacts with MAPRE1/EB1. In terms of tissue distribution, present in the soma, axon, and dendritic shaft of hippocampal neurons (at protein level).

The protein localises to the cytoplasm. It is found in the cytoskeleton. The protein resides in the golgi apparatus. It localises to the cilium basal body. In terms of biological role, key microtubule-organizing protein that specifically binds the minus-end of non-centrosomal microtubules and regulates their dynamics and organization. Specifically recognizes growing microtubule minus-ends and autonomously decorates and stabilizes microtubule lattice formed by microtubule minus-end polymerization. Acts on free microtubule minus-ends that are not capped by microtubule-nucleating proteins or other factors and protects microtubule minus-ends from depolymerization. In addition, it also reduces the velocity of microtubule polymerization. Through the microtubule cytoskeleton, also regulates the organization of cellular organelles including the Golgi and the early endosomes. Essential for the tethering, but not for nucleation of non-centrosomal microtubules at the Golgi: together with Golgi-associated proteins AKAP9 and PDE4DIP, required to tether non-centrosomal minus-end microtubules to the Golgi, an important step for polarized cell movement. Also acts as a regulator of neuronal polarity and development: localizes to non-centrosomal microtubule minus-ends in neurons and stabilizes non-centrosomal microtubules, which is required for neuronal polarity, axon specification and dendritic branch formation. Through the microtubule cytoskeleton, regulates the autophagosome transport. In Rattus norvegicus (Rat), this protein is Calmodulin-regulated spectrin-associated protein 2.